The sequence spans 722 residues: Glycine--tRNA ligase beta subunit (722 aa).

It belongs to the class-II aminoacyl-tRNA synthetase family. As to quaternary structure, tetramer of two alpha and two beta subunits.

The protein localises to the cytoplasm. It carries out the reaction tRNA(Gly) + glycine + ATP = glycyl-tRNA(Gly) + AMP + diphosphate. The chain is Glycine--tRNA ligase beta subunit from Haemophilus influenzae (strain 86-028NP).